The sequence spans 365 residues: Putative agmatine deiminase (365 aa).

The Amidino-cysteine intermediate role is filled by cysteine 357.

It belongs to the agmatine deiminase family.

The catalysed reaction is agmatine + H2O = N-carbamoylputrescine + NH4(+). The polypeptide is Putative agmatine deiminase (Yersinia pseudotuberculosis serotype O:1b (strain IP 31758)).